The chain runs to 155 residues: MASRSAGSLITHNNVTYIPPALMPGYRGHVPTASFTYGDTYGNTSARCFQDFRSTVLNSSRSPYCQGGQFPTSHSNDPALVIGHRSRGWDRFLHSPSWSRYNVDFKRSDELKQFHRAAEQHRDHYRDKSGTAHQVPHFIIPVKNPQTFPLPQQVL.

The protein belongs to the CIMIP2 family.

The protein resides in the cytoplasm. The protein localises to the cytoskeleton. It is found in the cilium axoneme. Microtubule inner protein (MIP) part of the dynein-decorated doublet microtubules (DMTs) in cilia axoneme, which is required for motile cilia beating. The sequence is that of Ciliary microtubule inner protein 2C (cimip2ca) from Xenopus laevis (African clawed frog).